Consider the following 110-residue polypeptide: UPF0145 protein (110 aa).

It belongs to the UPF0145 family.

This Listeria ivanovii protein is UPF0145 protein.